Here is a 249-residue protein sequence, read N- to C-terminus: Segregation and condensation protein A (249 aa).

Belongs to the ScpA family. In terms of assembly, component of a cohesin-like complex composed of ScpA, ScpB and the Smc homodimer, in which ScpA and ScpB bind to the head domain of Smc. The presence of the three proteins is required for the association of the complex with DNA.

The protein localises to the cytoplasm. Its function is as follows. Participates in chromosomal partition during cell division. May act via the formation of a condensin-like complex containing Smc and ScpB that pull DNA away from mid-cell into both cell halves. The polypeptide is Segregation and condensation protein A (Listeria monocytogenes serotype 4b (strain CLIP80459)).